We begin with the raw amino-acid sequence, 658 residues long: Structure-specific endonuclease subunit SLX4 (658 aa).

Disordered regions lie at residues 17-37 (VDSD…IPGD), 74-123 (GATE…KSIT), and 327-383 (QPGV…QVLQ). Composition is skewed to low complexity over residues 75–90 (ATES…PPAK) and 99–108 (KAAGRTSTGT). Positions 365–374 (FPKSPTSTPE) are enriched in polar residues.

Belongs to the SLX4 family. In terms of assembly, forms a heterodimer with SLX1. Phosphorylated in response to DNA damage.

It is found in the nucleus. Its function is as follows. Regulatory subunit of the SLX1-SLX4 structure-specific endonuclease that resolves DNA secondary structures generated during DNA repair and recombination. Has endonuclease activity towards branched DNA substrates, introducing single-strand cuts in duplex DNA close to junctions with ss-DNA. This chain is Structure-specific endonuclease subunit SLX4, found in Lachancea thermotolerans (strain ATCC 56472 / CBS 6340 / NRRL Y-8284) (Yeast).